The sequence spans 735 residues: Catalase-peroxidase (735 aa).

The disordered stretch occupies residues 1 to 25 (MSDSKCPVTGKSSRQVAGGGTSNRD). The segment at residues 95-223 (WHSAGTYRMG…LAAVQMGLIY (129 aa)) is a cross-link (tryptophyl-tyrosyl-methioninium (Trp-Tyr) (with M-249)). Catalysis depends on H96, which acts as the Proton acceptor. The segment at residues 223–249 (YINPEGPDGNPDPVASGRDVRETFARM) is a cross-link (tryptophyl-tyrosyl-methioninium (Tyr-Met) (with W-95)). H264 serves as a coordination point for heme b.

It belongs to the peroxidase family. Peroxidase/catalase subfamily. In terms of assembly, homodimer or homotetramer. The cofactor is heme b. Formation of the three residue Trp-Tyr-Met cross-link is important for the catalase, but not the peroxidase activity of the enzyme.

The enzyme catalyses H2O2 + AH2 = A + 2 H2O. It carries out the reaction 2 H2O2 = O2 + 2 H2O. Functionally, bifunctional enzyme with both catalase and broad-spectrum peroxidase activity. The chain is Catalase-peroxidase from Trichlorobacter lovleyi (strain ATCC BAA-1151 / DSM 17278 / SZ) (Geobacter lovleyi).